Consider the following 369-residue polypeptide: Peptide chain release factor 2 (369 aa).

Gln-251 carries the post-translational modification N5-methylglutamine.

The protein belongs to the prokaryotic/mitochondrial release factor family. Post-translationally, methylated by PrmC. Methylation increases the termination efficiency of RF2.

It localises to the cytoplasm. Its function is as follows. Peptide chain release factor 2 directs the termination of translation in response to the peptide chain termination codons UGA and UAA. The chain is Peptide chain release factor 2 from Campylobacter fetus subsp. fetus (strain 82-40).